The following is a 235-amino-acid chain: Phosphoribosylaminoimidazole-succinocarboxamide synthase (235 aa).

Belongs to the SAICAR synthetase family.

The enzyme catalyses 5-amino-1-(5-phospho-D-ribosyl)imidazole-4-carboxylate + L-aspartate + ATP = (2S)-2-[5-amino-1-(5-phospho-beta-D-ribosyl)imidazole-4-carboxamido]succinate + ADP + phosphate + 2 H(+). The protein operates within purine metabolism; IMP biosynthesis via de novo pathway; 5-amino-1-(5-phospho-D-ribosyl)imidazole-4-carboxamide from 5-amino-1-(5-phospho-D-ribosyl)imidazole-4-carboxylate: step 1/2. The chain is Phosphoribosylaminoimidazole-succinocarboxamide synthase from Streptococcus pneumoniae serotype 2 (strain D39 / NCTC 7466).